Here is a 467-residue protein sequence, read N- to C-terminus: NADH-quinone oxidoreductase subunit H (467 aa).

The next 9 membrane-spanning stretches (helical) occupy residues 18 to 38 (WWLV…TVLF), 88 to 108 (AVYV…IAVI), 131 to 151 (LPIA…GIVL), 172 to 192 (MISY…YSGS), 206 to 226 (WYIV…VGET), 256 to 276 (FMLA…TLFL), 296 to 316 (WWPL…FIWL), 328 to 348 (LMKL…MLVA), and 363 to 383 (IALY…LVDM). The interval 389-467 (GKAADQPAET…PTDGKEASDG (79 aa)) is disordered. Residues 418 to 430 (PVPPMPGQQVPPV) are compositionally biased toward pro residues.

It belongs to the complex I subunit 1 family. In terms of assembly, NDH-1 is composed of 14 different subunits. Subunits NuoA, H, J, K, L, M, N constitute the membrane sector of the complex.

It localises to the cell membrane. It carries out the reaction a quinone + NADH + 5 H(+)(in) = a quinol + NAD(+) + 4 H(+)(out). In terms of biological role, NDH-1 shuttles electrons from NADH, via FMN and iron-sulfur (Fe-S) centers, to quinones in the respiratory chain. The immediate electron acceptor for the enzyme in this species is believed to be ubiquinone. Couples the redox reaction to proton translocation (for every two electrons transferred, four hydrogen ions are translocated across the cytoplasmic membrane), and thus conserves the redox energy in a proton gradient. This subunit may bind ubiquinone. This chain is NADH-quinone oxidoreductase subunit H, found in Streptomyces coelicolor (strain ATCC BAA-471 / A3(2) / M145).